Reading from the N-terminus, the 201-residue chain is Lipopolysaccharide core heptose(II)-phosphate phosphatase (201 aa).

Residues 1-35 (MLAFTLRFIKNKRYLATLAGALVIIAGLTSQHAWS) form the signal peptide.

The protein belongs to the phosphoglycerate mutase family. Ais subfamily.

The protein resides in the periplasm. Its pathway is bacterial outer membrane biogenesis; lipopolysaccharide metabolism. Catalyzes the dephosphorylation of heptose(II) of the outer membrane lipopolysaccharide core. The sequence is that of Lipopolysaccharide core heptose(II)-phosphate phosphatase from Salmonella schwarzengrund (strain CVM19633).